The primary structure comprises 464 residues: Maturase K (464 aa).

This sequence belongs to the intron maturase 2 family. MatK subfamily.

The protein localises to the plastid. It is found in the chloroplast. Functionally, usually encoded in the trnK tRNA gene intron. Probably assists in splicing its own and other chloroplast group II introns. The polypeptide is Maturase K (Castanea crenata (Japanese chestnut)).